A 185-amino-acid chain; its full sequence is Putative RNA (cytidine(34)-2'-O)-methyltransferase (185 aa).

S-adenosyl-L-methionine-binding residues include Ile-80, Gly-105, and Ile-126.

This sequence belongs to the class IV-like SAM-binding methyltransferase superfamily. RNA methyltransferase TrmH family. TrmL subfamily.

Its subcellular location is the cytoplasm. It carries out the reaction cytidine(34) in tRNA + S-adenosyl-L-methionine = 2'-O-methylcytidine(34) in tRNA + S-adenosyl-L-homocysteine + H(+). It catalyses the reaction 5-carboxymethylaminomethyluridine(34) in tRNA(Leu) + S-adenosyl-L-methionine = 5-carboxymethylaminomethyl-2'-O-methyluridine(34) in tRNA(Leu) + S-adenosyl-L-homocysteine + H(+). Functionally, could methylate the ribose at the nucleotide 34 wobble position in tRNA. This chain is Putative RNA (cytidine(34)-2'-O)-methyltransferase, found in Lactobacillus gasseri (strain ATCC 33323 / DSM 20243 / BCRC 14619 / CIP 102991 / JCM 1131 / KCTC 3163 / NCIMB 11718 / NCTC 13722 / AM63).